A 205-amino-acid chain; its full sequence is Small ribosomal subunit protein uS4 (205 aa).

The region spanning 103 to 173 is the S4 RNA-binding domain; sequence RRLQTIVMKK…LEKSKRAEAA (71 aa). The disordered stretch occupies residues 174–205; that stretch reads AREAAAEAAEAEQAAAQAAAPTPAPAAAAPKQ. The span at 179–205 shows a compositional bias: low complexity; the sequence is AEAAEAEQAAAQAAAPTPAPAAAAPKQ.

This sequence belongs to the universal ribosomal protein uS4 family. Part of the 30S ribosomal subunit. Contacts protein S5. The interaction surface between S4 and S5 is involved in control of translational fidelity.

Its function is as follows. One of the primary rRNA binding proteins, it binds directly to 16S rRNA where it nucleates assembly of the body of the 30S subunit. Functionally, with S5 and S12 plays an important role in translational accuracy. The chain is Small ribosomal subunit protein uS4 from Cenarchaeum symbiosum (strain A).